The following is a 365-amino-acid chain: L-lactate oxidase (365 aa).

Residues 2 to 365 enclose the FMN hydroxy acid dehydrogenase domain; it reads TAISSPINLF…QDIDTSFLHL (364 aa). Position 28 (Tyr28) interacts with pyruvate. Residues 81 to 83, Ser110, and Gln135 each bind FMN; that span reads PMA. A pyruvate-binding site is contributed by Tyr137. Thr163 contributes to the FMN binding site. Arg172 is a pyruvate binding site. FMN is bound by residues Lys239 and Ser261. Residues His263 and Arg266 each coordinate pyruvate. The Proton acceptor role is filled by His263. Residues 294-298 and Arg318 each bind FMN; that span reads DGGIR.

It belongs to the FMN-dependent alpha-hydroxy acid dehydrogenase family. Homotetramer. FMN is required as a cofactor.

The enzyme catalyses (S)-lactate + O2 = pyruvate + H2O2. It catalyses the reaction glyoxylate + O2 + H2O = oxalate + H2O2 + H(+). Functionally, catalyzes the oxidation of (S)-lactate (L-lactate) to pyruvate, with a reduction of O2 to H2O2. In extant N2-fixing cyanobacteria such as Nostoc, this enzyme primarily serves as an O2-scavenging enzyme, protecting nitrogenase that is extremely sensitive to O2, and is therefore an essential partner in N2 fixation. Also shows clear oxidase activity with glyoxylate in vitro, and low activity with glycerate, hydroxypyruvate and glycolate. The very low glycolate oxidase activity indicates that this enzyme is unlikely to be involved in photorespiratory glycolate metabolism, a pathway that seems to exist in this cyanobacterium, but in which the oxidation of glycolate is taken over by glycolate dehydrogenase (GlcD). Is not able to use D-lactate as substrate and does not show any dehydrogenase activity with NAD(+) or NADP(+). The sequence is that of L-lactate oxidase from Nostoc sp. (strain PCC 7120 / SAG 25.82 / UTEX 2576).